Here is a 207-residue protein sequence, read N- to C-terminus: Large ribosomal subunit protein uL4 (207 aa).

The interval 45–89 (RQGTHKVKTRSEVRGGGRKPWRQKGTGRARQGSIRSPQWRGGGTV) is disordered. The span at 60 to 71 (GGRKPWRQKGTG) shows a compositional bias: basic residues.

It belongs to the universal ribosomal protein uL4 family. In terms of assembly, part of the 50S ribosomal subunit.

In terms of biological role, one of the primary rRNA binding proteins, this protein initially binds near the 5'-end of the 23S rRNA. It is important during the early stages of 50S assembly. It makes multiple contacts with different domains of the 23S rRNA in the assembled 50S subunit and ribosome. Functionally, forms part of the polypeptide exit tunnel. In Bacillus mycoides (strain KBAB4) (Bacillus weihenstephanensis), this protein is Large ribosomal subunit protein uL4.